The sequence spans 348 residues: Hereditary hemochromatosis protein homolog (348 aa).

An N-terminal signal peptide occupies residues 1 to 22 (MGPRARPALFFLILLRTVAAQG). Residues 23–114 (RPPRSHSLRY…IMDNHNHSKE (92 aa)) are alpha-1. Topologically, residues 23–306 (RPPRSHSLRY…WEPSLSNTLV (284 aa)) are extracellular. N-linked (GlcNAc...) asparagine glycosylation is found at asparagine 110, asparagine 130, and asparagine 234. The interval 115 to 205 (SHTLQVILGC…ELGRGVLDQQ (91 aa)) is alpha-2. Intrachain disulfides connect cysteine 124–cysteine 187 and cysteine 225–cysteine 282. The interval 206 to 297 (VPPLVKVTHH…GLDQPLTATW (92 aa)) is alpha-3. Residues 207–296 (PPLVKVTHHV…PGLDQPLTAT (90 aa)) form the Ig-like C1-type domain. The tract at residues 298 to 306 (EPSLSNTLV) is connecting peptide. Residues 307–330 (TGVISGIAVCVIIFLIGILFRILR) form a helical membrane-spanning segment. The Cytoplasmic segment spans residues 331–348 (KRQASRGAMGDYVLAECE).

This sequence belongs to the MHC class I family. As to quaternary structure, binds TFR through the extracellular domain in a pH-dependent manner.

It localises to the cell membrane. Its function is as follows. Binds to transferrin receptor (TFR) and reduces its affinity for iron-loaded transferrin. This chain is Hereditary hemochromatosis protein homolog (HFE), found in Dicerorhinus sumatrensis (Sumatran rhinoceros).